Consider the following 108-residue polypeptide: Cell cycle protein GpsB (108 aa).

A coiled-coil region spans residues 32–69; sequence LDNVIKDYENFNAQIEALKAENEALKKAKFQARNTVSA.

The protein belongs to the GpsB family. In terms of assembly, forms polymers through the coiled coil domains. Interacts with PBP1, MreC and EzrA.

Its subcellular location is the cytoplasm. In terms of biological role, divisome component that associates with the complex late in its assembly, after the Z-ring is formed, and is dependent on DivIC and PBP2B for its recruitment to the divisome. Together with EzrA, is a key component of the system that regulates PBP1 localization during cell cycle progression. Its main role could be the removal of PBP1 from the cell pole after pole maturation is completed. Also contributes to the recruitment of PBP1 to the division complex. Not essential for septum formation. The sequence is that of Cell cycle protein GpsB from Streptococcus pyogenes serotype M28 (strain MGAS6180).